Reading from the N-terminus, the 166-residue chain is Protein-export protein SecB (166 aa).

Belongs to the SecB family. As to quaternary structure, homotetramer, a dimer of dimers. One homotetramer interacts with 1 SecA dimer.

Its subcellular location is the cytoplasm. In terms of biological role, one of the proteins required for the normal export of preproteins out of the cell cytoplasm. It is a molecular chaperone that binds to a subset of precursor proteins, maintaining them in a translocation-competent state. It also specifically binds to its receptor SecA. In Actinobacillus pleuropneumoniae serotype 5b (strain L20), this protein is Protein-export protein SecB.